Reading from the N-terminus, the 2670-residue chain is Inositol 1,4,5-trisphosphate-gated calcium channel ITPR3 (2670 aa).

At 1 to 2201 (MNEMSSFLHI…LIYWFSRRMT (2201 aa)) the chain is on the cytoplasmic side. 5 MIR domains span residues 113-173 (GDVV…LRSN), 174-224 (GDNV…INLF), 232-288 (EEVL…VEVV), 295-372 (GGAG…LDPT), and 378-434 (DSFV…IVSV). The 1D-myo-inositol 1,4,5-trisphosphate site is built by Arg-266, Thr-268, Leu-269, and Arg-270. The segment at 321–344 (PSYKGDVSDPKAAGPGAQSRTGRR) is disordered. Positions 503, 507, 510, 567, 568, and 569 each coordinate 1D-myo-inositol 1,4,5-trisphosphate. Residue Arg-743 participates in Ca(2+) binding. A phosphoserine mark is found at Ser-916 and Ser-934. The Ca(2+) site is built by Glu-1122 and Glu-1125. The segment covering 1134 to 1153 (VKGEEGEAGASKDKKERPSD) has biased composition (basic and acidic residues). Disordered regions lie at residues 1134 to 1164 (VKGE…HGEK) and 1807 to 1849 (NMSD…GLHR). Ser-1813, Ser-1832, and Ser-1834 each carry phosphoserine. Over residues 1831–1842 (SSFSMPSSSRYS) the composition is skewed to low complexity. Residues Glu-1881 and Glu-1945 each contribute to the Ca(2+) site. The ATP site is built by Ala-1995, Glu-2148, and Lys-2151. A helical transmembrane segment spans residues 2202–2222 (LWGSISFNLAVFINIIIAFFY). Residues 2223–2233 (PYVEGASTGVL) lie on the Extracellular side of the membrane. A helical membrane pass occupies residues 2234–2254 (GSPLISLLFWILICFSIAALF). The Cytoplasmic segment spans residues 2255–2263 (TKHYSVRPL). Residues 2264 to 2284 (IVALVLRSIYYLGIGPTLNIL) form a helical membrane-spanning segment. Residues 2285-2324 (GALNLTNKIVFVVSFVGNRGTFIRGYKAMVMDMEFLYHVG) are Extracellular-facing. The helical transmembrane segment at 2325–2345 (YILTSVLGLFAHELFYSILLF) threads the bilayer. Over 2346 to 2367 (DLIYREETLFNVIKSVTRNGRS) the chain is Cytoplasmic. The chain crosses the membrane as a helical span at residues 2368–2388 (ILLTALLALILVYLFSIVGFL). Topologically, residues 2389–2495 (FLKDDFILEV…ESLFPARVVY (107 aa)) are extracellular. Residues Cys-2454 and Cys-2460 are joined by a disulfide bond. Residues 2496 to 2516 (DLLFFFIVIIIVLNLIFGVII) form a helical membrane-spanning segment. Over 2517–2670 (DTFADLRSEK…FVDVQNCMSR (154 aa)) the chain is Cytoplasmic. The ATP site is built by Cys-2537 and Phe-2538. Cys-2537 is a Zn(2+) binding site. Residues Cys-2540 and His-2557 each coordinate Zn(2+). Positions 2559, 2562, 2563, and 2564 each coordinate ATP. Residue His-2562 coordinates Zn(2+). Residue Thr-2580 coordinates Ca(2+). Phosphoserine occurs at positions 2608 and 2669.

This sequence belongs to the InsP3 receptor family. Homotetramer. Homodimer. Interacts with TRPC1 and TRPC3. Interacts with TRPC4. Interacts with TRPV4. Interacts with SIGMAR1. Interacts with AKT1 and PML. Interacts with IRAG2 (via coiled-coil domain). Interacts with CABP1. Interacts with TMBIM4/LFG4. Interacts with CEMIP. Interacts with TESPA1. Interacts with TMEM203. Interacts with BOK; regulates ITPR3 expression. Interacts with BCL2L10. Interacts with CHGA and CHGB. In terms of processing, phosphorylated by AKT1 on serine and/or threonine residues.

It is found in the endoplasmic reticulum membrane. The protein resides in the cytoplasmic vesicle. The protein localises to the secretory vesicle membrane. It catalyses the reaction Ca(2+)(in) = Ca(2+)(out). With respect to regulation, inositol 1,4,5-trisphosphate-gated calcium channel is regulated by cytosolic calcium in a biphasic manner. At low concentrations, cytosolic calcium binds at a high-affinity juxtamembrane domain (JD) calcium binding site, allowing ITPR3 to activate by escaping a low-energy resting state through an ensemble of preactivated states. At high cytosolic calcium concentrations, ITPR3 preferentially enters an inhibited state stabilized by calcium binding at a second, low-affinity cytoplasmic domain (CD) calcium binding site. In terms of biological role, inositol 1,4,5-trisphosphate-gated calcium channel that, upon 1D-myo-inositol 1,4,5-trisphosphate binding, transports calcium from the endoplasmic reticulum lumen to cytoplasm, thus releasing the intracellular calcium and therefore participates in cellular calcium ion homeostasis. 11D-myo-inositol 1,4,5-trisphosphate binds to the ligand-free channel without altering its global conformation, yielding the low-energy resting state, then progresses through resting-to preactivated transitions to the higher energy preactivated state, which increases affinity for calcium, promoting binding of the low basal cytosolic calcium at the juxtamembrane domain (JD) site, favoring the transition through the ensemble of high-energy intermediate states along the trajectory to the fully-open activated state. Upon opening, releases calcium in the cytosol where it can bind to the low-affinity cytoplasmic domain (CD) site and stabilizes the inhibited state to terminate calcium release. The chain is Inositol 1,4,5-trisphosphate-gated calcium channel ITPR3 from Rattus norvegicus (Rat).